The chain runs to 239 residues: Proteasome activator complex subunit 2 (239 aa).

The residue at position 2 (Ala2) is an N-acetylalanine. The residue at position 10 (Ser10) is a Phosphoserine.

It belongs to the PA28 family. As to quaternary structure, heterodimer of PSME1 and PSME2, which forms a hexameric ring.

Implicated in immunoproteasome assembly and required for efficient antigen processing. The PA28 activator complex enhances the generation of class I binding peptides by altering the cleavage pattern of the proteasome. This is Proteasome activator complex subunit 2 (PSME2) from Homo sapiens (Human).